The sequence spans 610 residues: Elongation factor 4 (610 aa).

A tr-type G domain is found at Asn-14 to Lys-196. GTP is bound by residues Asp-26–Thr-31 and Asn-143–Asp-146.

It belongs to the TRAFAC class translation factor GTPase superfamily. Classic translation factor GTPase family. LepA subfamily.

It localises to the cell inner membrane. It catalyses the reaction GTP + H2O = GDP + phosphate + H(+). Required for accurate and efficient protein synthesis under certain stress conditions. May act as a fidelity factor of the translation reaction, by catalyzing a one-codon backward translocation of tRNAs on improperly translocated ribosomes. Back-translocation proceeds from a post-translocation (POST) complex to a pre-translocation (PRE) complex, thus giving elongation factor G a second chance to translocate the tRNAs correctly. Binds to ribosomes in a GTP-dependent manner. The polypeptide is Elongation factor 4 (Legionella pneumophila (strain Paris)).